A 244-amino-acid polypeptide reads, in one-letter code: Pyridoxal phosphate homeostasis protein (244 aa).

Position 37 is an N6-(pyridoxal phosphate)lysine (Lys-37).

It belongs to the pyridoxal phosphate-binding protein YggS/PROSC family.

In terms of biological role, pyridoxal 5'-phosphate (PLP)-binding protein, which may be involved in intracellular homeostatic regulation of pyridoxal 5'-phosphate (PLP), the active form of vitamin B6. In Caenorhabditis elegans, this protein is Pyridoxal phosphate homeostasis protein.